A 320-amino-acid polypeptide reads, in one-letter code: Foldase protein PrsA (320 aa).

The signal sequence occupies residues 1-20; sequence MKMINKLIVPVTASALLLGA. Cys-21 carries N-palmitoyl cysteine lipidation. Cys-21 carries S-diacylglycerol cysteine lipidation. The 107-residue stretch at 139–245 folds into the PpiC domain; the sequence is EDSKKASHIL…FGYHIIKADK (107 aa). Residues 159-198 form a disordered region; it reads EGLDDKEAKQKAEEIQKEVSKDPSKFGEIAKKESMDTGSA.

The protein belongs to the PrsA family.

The protein resides in the cell membrane. It catalyses the reaction [protein]-peptidylproline (omega=180) = [protein]-peptidylproline (omega=0). Functionally, plays a major role in protein secretion by helping the post-translocational extracellular folding of several secreted proteins. This Staphylococcus aureus (strain bovine RF122 / ET3-1) protein is Foldase protein PrsA.